Reading from the N-terminus, the 235-residue chain is Large ribosomal subunit protein uL1 (235 aa).

This sequence belongs to the universal ribosomal protein uL1 family. In terms of assembly, part of the 50S ribosomal subunit.

In terms of biological role, binds directly to 23S rRNA. The L1 stalk is quite mobile in the ribosome, and is involved in E site tRNA release. Protein L1 is also a translational repressor protein, it controls the translation of the L11 operon by binding to its mRNA. In Synechococcus sp. (strain WH7803), this protein is Large ribosomal subunit protein uL1.